A 371-amino-acid chain; its full sequence is Queuine tRNA-ribosyltransferase (371 aa).

Asp90 serves as the catalytic Proton acceptor. Substrate-binding positions include 90-94, Asp144, Gln188, and Gly215; that span reads DSGGF. The interval 246–252 is RNA binding; the sequence is GVGTPED. Residue Asp265 is the Nucleophile of the active site. Residues 270–274 are RNA binding; important for wobble base 34 recognition; sequence TRNAR. 4 residues coordinate Zn(2+): Cys303, Cys305, Cys308, and His334.

It belongs to the queuine tRNA-ribosyltransferase family. As to quaternary structure, homodimer. Within each dimer, one monomer is responsible for RNA recognition and catalysis, while the other monomer binds to the replacement base PreQ1. Zn(2+) is required as a cofactor.

It catalyses the reaction 7-aminomethyl-7-carbaguanine + guanosine(34) in tRNA = 7-aminomethyl-7-carbaguanosine(34) in tRNA + guanine. It functions in the pathway tRNA modification; tRNA-queuosine biosynthesis. Catalyzes the base-exchange of a guanine (G) residue with the queuine precursor 7-aminomethyl-7-deazaguanine (PreQ1) at position 34 (anticodon wobble position) in tRNAs with GU(N) anticodons (tRNA-Asp, -Asn, -His and -Tyr). Catalysis occurs through a double-displacement mechanism. The nucleophile active site attacks the C1' of nucleotide 34 to detach the guanine base from the RNA, forming a covalent enzyme-RNA intermediate. The proton acceptor active site deprotonates the incoming PreQ1, allowing a nucleophilic attack on the C1' of the ribose to form the product. After dissociation, two additional enzymatic reactions on the tRNA convert PreQ1 to queuine (Q), resulting in the hypermodified nucleoside queuosine (7-(((4,5-cis-dihydroxy-2-cyclopenten-1-yl)amino)methyl)-7-deazaguanosine). In Neisseria meningitidis serogroup A / serotype 4A (strain DSM 15465 / Z2491), this protein is Queuine tRNA-ribosyltransferase.